The following is a 101-amino-acid chain: Small ribosomal subunit protein uS14 (101 aa).

Belongs to the universal ribosomal protein uS14 family. Part of the 30S ribosomal subunit. Contacts proteins S3 and S10.

In terms of biological role, binds 16S rRNA, required for the assembly of 30S particles and may also be responsible for determining the conformation of the 16S rRNA at the A site. This is Small ribosomal subunit protein uS14 from Shewanella baltica (strain OS155 / ATCC BAA-1091).